We begin with the raw amino-acid sequence, 906 residues long: Patched domain-containing protein 3 (906 aa).

A disordered region spans residues 1–70 (MISSKVAPGE…LGQEAPPPRR (70 aa)). N-linked (GlcNAc...) asparagine glycosylation is found at asparagine 148 and asparagine 235. Helical transmembrane passes span 338–358 (TVIP…VVSC), 370–390 (VAVF…GLML), 392–412 (LGVP…GVGV), 442–462 (VAVS…TGIT), 476–496 (GTTL…VMAL), 559–579 (FIVV…CFQV), 760–780 (VMIA…HPVC), 782–802 (LWVT…MAFW), 814–834 (LVIC…AFVS), 848–868 (LYLL…GVCV), and 883–903 (IMFL…PVFL). Residues 339-496 (VIPLFHLAYI…ITCFGAVMAL (158 aa)) form the SSD domain.

It belongs to the patched family. As to expression, expressed in germ cells of the testis (at protein level).

It is found in the cell projection. It localises to the cilium. The protein localises to the flagellum membrane. Its subcellular location is the endoplasmic reticulum membrane. In terms of biological role, may play a role in sperm development or sperm function. However, does not appear to have an essential role in spermatogenesis or male fertility. The protein is Patched domain-containing protein 3 (Ptchd3) of Mus musculus (Mouse).